Consider the following 675-residue polypeptide: Methionine--tRNA ligase (675 aa).

A 'HIGH' region motif is present at residues 15-25 (PYANGSIHLGH). 4 residues coordinate Zn(2+): Cys146, Cys149, Cys159, and Cys162. A 'KMSKS' region motif is present at residues 332 to 336 (KMSKS). Lys335 is a binding site for ATP. The region spanning 573–675 (DFAKVDMRIA…SGAQPGMQVK (103 aa)) is the tRNA-binding domain.

The protein belongs to the class-I aminoacyl-tRNA synthetase family. MetG type 1 subfamily. As to quaternary structure, homodimer. Zn(2+) is required as a cofactor.

It localises to the cytoplasm. The catalysed reaction is tRNA(Met) + L-methionine + ATP = L-methionyl-tRNA(Met) + AMP + diphosphate. Functionally, is required not only for elongation of protein synthesis but also for the initiation of all mRNA translation through initiator tRNA(fMet) aminoacylation. The chain is Methionine--tRNA ligase from Serratia proteamaculans (strain 568).